A 345-amino-acid polypeptide reads, in one-letter code: Inositol 2-dehydrogenase (345 aa).

It belongs to the Gfo/Idh/MocA family. As to quaternary structure, homotetramer.

The catalysed reaction is myo-inositol + NAD(+) = scyllo-inosose + NADH + H(+). Functionally, involved in the oxidation of myo-inositol (MI) to 2-keto-myo-inositol (2KMI or 2-inosose). In Mycolicibacterium smegmatis (strain ATCC 700084 / mc(2)155) (Mycobacterium smegmatis), this protein is Inositol 2-dehydrogenase.